We begin with the raw amino-acid sequence, 254 residues long: MRRVRYFLLALLVAILAALAGGYYWLHSGNPDALRKIVLQQCVPHQQQQQNPSPCAEVNLKGGYVLFKDRNGPLQYLLMPTYRINGTESPLLLDPLTPNFFWQAWQGREIMSQRHGAPVPDNAISLAINSRSGRTQNHFHIHISCLRPDVRAQLDKDAAAVSSRWLPLPGGLQGHEYLARRVTEAELAQRSPFLMLAEEVPEAREHMGRFALAMAQQSDGSLVLLATERNLLTLNRASAEEIQDHRCAILNANH.

A helical membrane pass occupies residues 6-26 (YFLLALLVAILAALAGGYYWL).

This sequence belongs to the Cdh family.

It localises to the cell inner membrane. The enzyme catalyses a CDP-1,2-diacyl-sn-glycerol + H2O = a 1,2-diacyl-sn-glycero-3-phosphate + CMP + 2 H(+). It functions in the pathway phospholipid metabolism; CDP-diacylglycerol degradation; phosphatidate from CDP-diacylglycerol: step 1/1. The chain is CDP-diacylglycerol pyrophosphatase from Klebsiella pneumoniae (strain 342).